We begin with the raw amino-acid sequence, 313 residues long: Pseudouridine-5'-phosphate glycosidase (313 aa).

The active-site Proton donor is the E26. Positions 87 and 107 each coordinate substrate. Position 139 (D139) interacts with Mn(2+). 141 to 143 (SAD) is a substrate binding site. K160 serves as the catalytic Nucleophile.

Belongs to the pseudouridine-5'-phosphate glycosidase family. In terms of assembly, homotrimer. The cofactor is Mn(2+).

The catalysed reaction is D-ribose 5-phosphate + uracil = psi-UMP + H2O. Its function is as follows. Catalyzes the reversible cleavage of pseudouridine 5'-phosphate (PsiMP) to ribose 5-phosphate and uracil. Functions biologically in the cleavage direction, as part of a pseudouridine degradation pathway. The polypeptide is Pseudouridine-5'-phosphate glycosidase (Corynebacterium aurimucosum (strain ATCC 700975 / DSM 44827 / CIP 107346 / CN-1) (Corynebacterium nigricans)).